Here is a 216-residue protein sequence, read N- to C-terminus: Cell division protein SepF (216 aa).

A disordered region spans residues 22–126; the sequence is EYVEEPDQAR…PVVDDGGPLA (105 aa). 3 stretches are compositionally biased toward basic and acidic residues: residues 28–50, 62–80, and 106–118; these read DQAR…REFV, SRRD…RPRV, and ARAE…RAPV.

The protein belongs to the SepF family. In terms of assembly, homodimer. Interacts with FtsZ.

Its subcellular location is the cytoplasm. In terms of biological role, cell division protein that is part of the divisome complex and is recruited early to the Z-ring. Probably stimulates Z-ring formation, perhaps through the cross-linking of FtsZ protofilaments. Its function overlaps with FtsA. This Rhodococcus erythropolis (strain PR4 / NBRC 100887) protein is Cell division protein SepF.